The primary structure comprises 262 residues: Lectin (262 aa).

Residues 1–21 form the signal peptide; it reads MASSVLLVLSLFLVLLLTQAS. Asparagine 53, asparagine 82, asparagine 100, asparagine 129, and asparagine 205 each carry an N-linked (GlcNAc...) asparagine glycan.

This sequence belongs to the leguminous lectin family.

This metalloglycoprotein, containing Ca(2+), Mn(2+), binds glycoconjugates containing terminal non-reducing alpha-D-GalNAc residues. The polypeptide is Lectin (Phaseolus lunatus (Lima bean)).